A 361-amino-acid polypeptide reads, in one-letter code: Tyrosine--tRNA ligase (361 aa).

5 residues coordinate L-tyrosine: tyrosine 36, tyrosine 162, glutamine 166, aspartate 169, and glutamine 184. The short motif at 236–240 (KMSKS) is the 'KMSKS' region element. Lysine 239 contacts ATP.

Belongs to the class-I aminoacyl-tRNA synthetase family. TyrS type 4 subfamily. In terms of assembly, homodimer.

Its subcellular location is the cytoplasm. It catalyses the reaction tRNA(Tyr) + L-tyrosine + ATP = L-tyrosyl-tRNA(Tyr) + AMP + diphosphate + H(+). Catalyzes the attachment of tyrosine to tRNA(Tyr) in a two-step reaction: tyrosine is first activated by ATP to form Tyr-AMP and then transferred to the acceptor end of tRNA(Tyr). The protein is Tyrosine--tRNA ligase of Saccharolobus islandicus (strain L.S.2.15 / Lassen #1) (Sulfolobus islandicus).